We begin with the raw amino-acid sequence, 134 residues long: Large ribosomal subunit protein uL18 (134 aa).

The protein belongs to the universal ribosomal protein uL18 family. Part of the 50S ribosomal subunit; part of the 5S rRNA/L5/L18/L25 subcomplex. Contacts the 5S and 23S rRNAs.

This is one of the proteins that bind and probably mediate the attachment of the 5S RNA into the large ribosomal subunit, where it forms part of the central protuberance. The sequence is that of Large ribosomal subunit protein uL18 from Corynebacterium glutamicum (strain ATCC 13032 / DSM 20300 / JCM 1318 / BCRC 11384 / CCUG 27702 / LMG 3730 / NBRC 12168 / NCIMB 10025 / NRRL B-2784 / 534).